Reading from the N-terminus, the 425-residue chain is Serine--tRNA ligase (425 aa).

228–230 (TAE) is an L-serine binding site. 259 to 261 (RSE) lines the ATP pocket. Residue Glu282 coordinates L-serine. 346-349 (EIAS) is a binding site for ATP. Ser382 lines the L-serine pocket.

It belongs to the class-II aminoacyl-tRNA synthetase family. Type-1 seryl-tRNA synthetase subfamily. In terms of assembly, homodimer. The tRNA molecule binds across the dimer.

The protein localises to the cytoplasm. It catalyses the reaction tRNA(Ser) + L-serine + ATP = L-seryl-tRNA(Ser) + AMP + diphosphate + H(+). The enzyme catalyses tRNA(Sec) + L-serine + ATP = L-seryl-tRNA(Sec) + AMP + diphosphate + H(+). The protein operates within aminoacyl-tRNA biosynthesis; selenocysteinyl-tRNA(Sec) biosynthesis; L-seryl-tRNA(Sec) from L-serine and tRNA(Sec): step 1/1. In terms of biological role, catalyzes the attachment of serine to tRNA(Ser). Is also able to aminoacylate tRNA(Sec) with serine, to form the misacylated tRNA L-seryl-tRNA(Sec), which will be further converted into selenocysteinyl-tRNA(Sec). In Rickettsia peacockii (strain Rustic), this protein is Serine--tRNA ligase.